The chain runs to 737 residues: Oligopeptide transporter 3 (737 aa).

Helical transmembrane passes span 45-65, 69-89, 117-137, 153-173, 215-235, 255-275, 289-309, 357-377, 418-438, 446-466, 478-498, 532-552, 604-624, 629-649, 650-670, and 681-701; these read AWFL…FFTY, PLTI…KFMA, VIIT…AYSI, FICG…WAGI, FLVA…LFPI, VGSG…AGIS, ILNV…VCYW, LYLS…FTAT, WWFY…SFVW, WWGM…IGVI, IIGQ…NLIF, AQLV…WWML, VWLF…SKIF, WIPL…PPAT, PTNI…VFNY, and VLSA…FFAL.

It belongs to the oligopeptide OPT transporter (TC 2.A.67.1) family. Strong expression in flowers, leaves and roots. Preferentially expressed in the vascular tissues of seedlings and mature plants as well as in pollen and developing embryos.

The protein resides in the membrane. Its function is as follows. May be involved in the translocation of tetra- and pentapeptides across the cellular membrane in an energy-dependent manner. Also acts as a metal transporter that could be a component of the copper transport machinery. Essential for early embryo development. In Arabidopsis thaliana (Mouse-ear cress), this protein is Oligopeptide transporter 3 (OPT3).